The following is a 440-amino-acid chain: Asparagine--tRNA ligase (440 aa).

This sequence belongs to the class-II aminoacyl-tRNA synthetase family. Homodimer.

Its subcellular location is the cytoplasm. The enzyme catalyses tRNA(Asn) + L-asparagine + ATP = L-asparaginyl-tRNA(Asn) + AMP + diphosphate + H(+). In Chloroflexus aurantiacus (strain ATCC 29364 / DSM 637 / Y-400-fl), this protein is Asparagine--tRNA ligase.